The primary structure comprises 170 residues: Peptide deformylase (170 aa).

The Fe cation site is built by cysteine 91 and histidine 133. Glutamate 134 is an active-site residue. Histidine 137 contacts Fe cation.

Belongs to the polypeptide deformylase family. Fe(2+) is required as a cofactor.

It catalyses the reaction N-terminal N-formyl-L-methionyl-[peptide] + H2O = N-terminal L-methionyl-[peptide] + formate. Functionally, removes the formyl group from the N-terminal Met of newly synthesized proteins. Requires at least a dipeptide for an efficient rate of reaction. N-terminal L-methionine is a prerequisite for activity but the enzyme has broad specificity at other positions. The chain is Peptide deformylase from Aeromonas salmonicida (strain A449).